We begin with the raw amino-acid sequence, 366 residues long: Probable cinnamyl alcohol dehydrogenase 3 (366 aa).

C53 serves as a coordination point for Zn(2+). S55 contacts NADP(+). Residues H75, E76, C106, C109, C112, C120, and C169 each coordinate Zn(2+). NADP(+)-binding positions include T173, 194 to 199 (GLGGLG), 217 to 222 (SSSPGK), T257, G281, and 304 to 306 (SNI).

The protein belongs to the zinc-containing alcohol dehydrogenase family. In terms of assembly, homodimer. The cofactor is Zn(2+).

It carries out the reaction (E)-cinnamyl alcohol + NADP(+) = (E)-cinnamaldehyde + NADPH + H(+). The enzyme catalyses (E)-coniferol + NADP(+) = (E)-coniferaldehyde + NADPH + H(+). The catalysed reaction is (E)-sinapyl alcohol + NADP(+) = (E)-sinapaldehyde + NADPH + H(+). It catalyses the reaction (E)-4-coumaroyl alcohol + NADP(+) = (E)-4-coumaraldehyde + NADPH + H(+). It carries out the reaction (E)-caffeyl alcohol + NADP(+) = (E)-caffeyl aldehyde + NADPH + H(+). It participates in aromatic compound metabolism; phenylpropanoid biosynthesis. Its function is as follows. Involved in lignin biosynthesis. Catalyzes the final step specific for the production of lignin monomers. Catalyzes the NADPH-dependent reduction of coniferaldehyde, 5-hydroxyconiferaldehyde, sinapaldehyde, 4-coumaraldehyde and caffeyl aldehyde to their respective alcohols. The chain is Probable cinnamyl alcohol dehydrogenase 3 from Oryza sativa subsp. japonica (Rice).